Reading from the N-terminus, the 47-residue chain is Defensin-like protein 2 (47 aa).

Cystine bridges form between Cys3-Cys47, Cys14-Cys36, Cys20-Cys41, and Cys24-Cys43.

This sequence belongs to the DEFL family.

This chain is Defensin-like protein 2, found in Zea mays (Maize).